The chain runs to 321 residues: Phosphate-import protein PhnD (321 aa).

A signal peptide spans methionine 1–alanine 22. The N-palmitoyl cysteine moiety is linked to residue cysteine 23. Cysteine 23 is lipidated: S-diacylglycerol cysteine.

It belongs to the phosphate/phosphite/phosphonate binding protein family. The complex is composed of two ATP-binding proteins (PhnC), two transmembrane proteins (PhnE) and a solute-binding protein (PhnD).

The protein resides in the cell membrane. In terms of biological role, part of the ABC transporter complex PhnCDE involved in phosphate import. Responsible for phosphate binding. The sequence is that of Phosphate-import protein PhnD (phnD) from Mycolicibacterium smegmatis (strain ATCC 700084 / mc(2)155) (Mycobacterium smegmatis).